The primary structure comprises 175 residues: Inner membrane protein p54 (175 aa).

The helical transmembrane segment at 32-52 threads the bilayer; that stretch reads CTILVAIVVLIIIIIVLIYLF. Over residues 79-89 the composition is skewed to polar residues; the sequence is QWAGATPQPGT. The disordered stretch occupies residues 79–121; sequence QWAGATPQPGTSKPAGATTGNVGKPITDRPATDRPVTNNPVTD. The segment at 141–153 is interaction with host DYNLL1; that stretch reads YTTATTQNTASQT.

The protein belongs to the asfivirus envelope protein p54 family. As to quaternary structure, interacts with the host light chain cytoplasmic dynein DYNLL1; this interaction is critical for intracellular microtubule-dependent virus transport toward viral factories.

It is found in the virion membrane. The protein localises to the host cytoplasm. It localises to the host cytoskeleton. The protein resides in the host endoplasmic reticulum membrane. In terms of biological role, inner envelope protein involved, through its interaction with host dynein, in the intracellular microtubule-dependent transport of viral capsid toward viral factories. Seems to induce caspase-3 activation and apoptosis. Plays a role in virion morphogenesis by recruiting and transforming the host ER membranes into the precursors of the viral envelope. Involved in virus attachment to the host cell. This chain is Inner membrane protein p54, found in African swine fever virus (isolate Pig/Kenya/KEN-50/1950) (ASFV).